The following is a 2225-amino-acid chain: Multifunctional protein CAD (2225 aa).

At A2 the chain carries N-acetylalanine. The GATase (Glutamine amidotransferase) stretch occupies residues 2–365; that stretch reads AALVLEDGSV…TVREAVAGNP (364 aa). The L-glutamine site is built by S44, G222, and G224. A Glutamine amidotransferase type-1 domain is found at 177 to 363; that stretch reads RICALDCGLK…LETVREAVAG (187 aa). Residue C252 is the Nucleophile; for GATase activity of the active site. L-glutamine-binding residues include L253, Q256, N294, G296, and F297. Catalysis depends on for GATase activity residues H336 and E338. Positions 366–394 are linker; sequence GGQTVKERLVQRLCPPGLLIPGSGLPPPR. Positions 395 to 933 are CPSase A; that stretch reads KVLILGSGGL…NTHDLDFRTP (539 aa). The interval 395 to 1455 is CPSase (Carbamoyl phosphate synthase); it reads KVLILGSGGL…APPLKVHVDC (1061 aa). T456 is subject to Phosphothreonine; by MAPK1. 11 residues coordinate ATP: R515, R555, G561, G562, K592, E599, G625, I626, H627, Q668, and E682. The region spanning 519–711 is the ATP-grasp 1 domain; it reads AARMAEIGEH…LAYVAAKLAL (193 aa). Mg(2+) contacts are provided by Q668, E682, and N684. Positions 668, 682, and 684 each coordinate Mn(2+). K747 is subject to N6-acetyllysine. The segment at 934–1455 is CPSase B; the sequence is HVLVLGSGVY…APPLKVHVDC (522 aa). At S1038 the chain carries Phosphoserine. In terms of domain architecture, ATP-grasp 2 spans 1052-1243; the sequence is SRLLDTIGIS…LVALATRIIM (192 aa). Residues R1088, K1127, I1129, E1134, G1159, V1160, H1161, S1162, Q1202, and E1214 each contribute to the ATP site. Mg(2+)-binding residues include Q1202, E1214, and N1216. The Mn(2+) site is built by Q1202, E1214, and N1216. Residues 1308 to 1462 form the MGS-like domain; sequence FKIPKKNILL…VDCMTSQKLV (155 aa). S1406 is modified (phosphoserine; by PKA). K1411 carries the N6-acetyllysine modification. Positions 1456–1788 are DHOase (dihydroorotase); sequence MTSQKLVRLP…VKGTIRRVVL (333 aa). Zn(2+) contacts are provided by H1471 and H1473. (S)-dihydroorotate contacts are provided by R1475 and N1505. Residues K1556, H1590, C1613, H1614, and E1637 each coordinate Zn(2+). Residue K1556 is modified to N6-carboxylysine. R1661 serves as a coordination point for (S)-dihydroorotate. D1686 serves as a coordination point for Zn(2+). The active-site For DHOase activity is D1686. H1690 and P1702 together coordinate (S)-dihydroorotate. The tract at residues 1789-1917 is linker; the sequence is RGEVAYIDGQ…GLLHPQTSPL (129 aa). Residues 1813 to 1911 form a disordered region; that stretch reads PQGAVPQPPP…QNLGSSGLLH (99 aa). Residues 1825 to 1834 are compositionally biased toward low complexity; the sequence is PATTEITTTP. S1859 carries the post-translational modification Phosphoserine; by RPS6KB1 and PKA. A compositionally biased stretch (basic and acidic residues) spans 1866 to 1878; that stretch reads EEPKEKPSRKVVE. S1873 carries the post-translational modification Phosphoserine; by PKC; in vitro. T1884 carries the post-translational modification Phosphothreonine. The span at 1899-1911 shows a compositional bias: polar residues; the sequence is ASPQNLGSSGLLH. A phosphoserine mark is found at S1900 and S1938. The ATCase (Aspartate transcarbamylase) stretch occupies residues 1918-2225; sequence LHSLVGQHIL…ALLATVLGRF (308 aa). Carbamoyl phosphate is bound by residues R1975 and T1976. K2003 contributes to the L-aspartate binding site. Carbamoyl phosphate-binding residues include R2024, H2052, and Q2055. L-aspartate is bound by residues R2085 and R2146. The carbamoyl phosphate site is built by M2185 and P2186.

It in the N-terminal section; belongs to the CarA family. In the 2nd section; belongs to the CarB family. This sequence in the 3rd section; belongs to the metallo-dependent hydrolases superfamily. DHOase family. CAD subfamily. The protein in the C-terminal section; belongs to the aspartate/ornithine carbamoyltransferase superfamily. ATCase family. As to quaternary structure, homohexamer. Interacts with CIPC. Zn(2+) is required as a cofactor. It depends on Mg(2+) as a cofactor. Mn(2+) serves as cofactor. Activated by MAP kinase (Erk1/2) phosphorylation just prior to the S phase of the cell cycle, when the demand for pyrimidine nucleotides is greatest, and down-regulated as the cells emerge from S phase by protein kinase A (PKA) phosphorylation. Phosphorylation at Ser-1859 by RPS6KB1 downstream of MTOR promotes oligomerization and stimulates dihydroorotase activity. Phosphorylation at Ser-1406 reduces sensitivity to feedback inhibition by UTP.

Its subcellular location is the cytoplasm. It localises to the nucleus. The catalysed reaction is hydrogencarbonate + L-glutamine + 2 ATP + H2O = carbamoyl phosphate + L-glutamate + 2 ADP + phosphate + 2 H(+). It carries out the reaction L-glutamine + H2O = L-glutamate + NH4(+). The enzyme catalyses hydrogencarbonate + NH4(+) + 2 ATP = carbamoyl phosphate + 2 ADP + phosphate + 2 H(+). It catalyses the reaction carbamoyl phosphate + L-aspartate = N-carbamoyl-L-aspartate + phosphate + H(+). The catalysed reaction is (S)-dihydroorotate + H2O = N-carbamoyl-L-aspartate + H(+). It participates in pyrimidine metabolism; UMP biosynthesis via de novo pathway; (S)-dihydroorotate from bicarbonate: step 1/3. The protein operates within pyrimidine metabolism; UMP biosynthesis via de novo pathway; (S)-dihydroorotate from bicarbonate: step 2/3. Its pathway is pyrimidine metabolism; UMP biosynthesis via de novo pathway; (S)-dihydroorotate from bicarbonate: step 3/3. Its activity is regulated as follows. Allosterically regulated and controlled by phosphorylation. 5-phosphoribose 1-diphosphate (PRPP) is an activator while UMP and UTP are inhibitors of the CPSase reaction. Functionally, multifunctional protein that encodes the first 3 enzymatic activities of the de novo pyrimidine pathway: carbamoylphosphate synthetase (CPSase; EC 6.3.5.5), aspartate transcarbamylase (ATCase; EC 2.1.3.2) and dihydroorotase (DHOase; EC 3.5.2.3). The CPSase-function is accomplished in 2 steps, by a glutamine-dependent amidotransferase activity (GATase) that binds and cleaves glutamine to produce ammonia, followed by an ammonium-dependent carbamoyl phosphate synthetase, which reacts with the ammonia, hydrogencarbonate and ATP to form carbamoyl phosphate. The endogenously produced carbamoyl phosphate is sequestered and channeled to the ATCase active site. ATCase then catalyzes the formation of carbamoyl-L-aspartate from L-aspartate and carbamoyl phosphate. In the last step, DHOase catalyzes the cyclization of carbamoyl aspartate to dihydroorotate. In Mesocricetus auratus (Golden hamster), this protein is Multifunctional protein CAD (CAD).